The primary structure comprises 337 residues: tRNA N6-adenosine threonylcarbamoyltransferase (337 aa).

Fe cation is bound by residues histidine 111 and histidine 115. Substrate is bound by residues 134–138 (LVSGG), aspartate 167, glycine 180, and asparagine 272. A Fe cation-binding site is contributed by aspartate 300.

It belongs to the KAE1 / TsaD family. Fe(2+) is required as a cofactor.

Its subcellular location is the cytoplasm. It catalyses the reaction L-threonylcarbamoyladenylate + adenosine(37) in tRNA = N(6)-L-threonylcarbamoyladenosine(37) in tRNA + AMP + H(+). Its function is as follows. Required for the formation of a threonylcarbamoyl group on adenosine at position 37 (t(6)A37) in tRNAs that read codons beginning with adenine. Is involved in the transfer of the threonylcarbamoyl moiety of threonylcarbamoyl-AMP (TC-AMP) to the N6 group of A37, together with TsaE and TsaB. TsaD likely plays a direct catalytic role in this reaction. This is tRNA N6-adenosine threonylcarbamoyltransferase from Citrobacter koseri (strain ATCC BAA-895 / CDC 4225-83 / SGSC4696).